Consider the following 378-residue polypeptide: Stimulator of interferon genes protein (378 aa).

Residues 1-17 (MPYSSLHPSIPQPRGLR) are Cytoplasmic-facing. Residues 1–190 (MPYSSLHPSI…AYNQRHKNVL (190 aa)) form a mediates interaction with ZDHHC1 and ZDHHC11 region. A helical membrane pass occupies residues 18–34 (AQVAALVLLGACLVALW). The Lumenal portion of the chain corresponds to 35-44 (GLGELPEYTL). A helical membrane pass occupies residues 45–69 (RWLVLHLASQQIGLLVKGLCSLAEE). Residues 70-91 (LCHVHSRYQSSYWRAARACLGC) lie on the Cytoplasmic side of the membrane. 2 S-palmitoyl cysteine lipidation sites follow: cysteine 88 and cysteine 91. A helical transmembrane segment spans residues 92–106 (PIRCGALLLLSCYFY). The Lumenal portion of the chain corresponds to 107–116 (FSIRDKAGLP). The helical transmembrane segment at 117-134 (LPWMLALLGLSQALNILL) threads the bilayer. The Cytoplasmic segment spans residues 135-378 (GLQHLAPAEV…QPLPLRSDIF (244 aa)). Lysine 150 is covalently cross-linked (Glycyl lysine isopeptide (Lys-Gly) (interchain with G-Cter in ubiquitin)). The interval 153–339 (FNVAHGLAWS…LRHLRQEERE (187 aa)) is cyclic dinucleotide-binding domain (CBD). Serine 162 and tyrosine 167 together coordinate 2',3'-cGAMP. The 3',3'-c-di-GMP site is built by serine 162 and tyrosine 167. Residue tyrosine 167 participates in 2',3'-cUAMP binding. Lysine 236 is covalently cross-linked (Glycyl lysine isopeptide (Lys-Gly) (interchain with G-Cter in ubiquitin)). Arginine 238 and threonine 263 together coordinate 2',3'-cGAMP. Residues arginine 238 and threonine 263 each contribute to the 2',3'-cUAMP site. 3',3'-c-di-GMP-binding positions include 238-241 (RVYT) and threonine 263. The segment at 339-378 (EVTMGSAETSVVPTSSTLSQEPELLISGMEQPLPLRSDIF) is C-terminal tail (CTT). The residue at position 354 (serine 354) is a Phosphoserine. Residue threonine 355 is modified to Phosphothreonine. Residues serine 357 and serine 365 each carry the phosphoserine; by TBK1 modification. A pLxIS motif motif is present at residues 362 to 365 (LLIS).

Belongs to the STING family. In terms of assembly, homodimer; forms a homodimer in absence of cyclic nucleotide (c-di-GMP or cGAMP); 'Lys-63'-linked ubiquitination at Lys-150 is required for homodimerization. Homotetramer; in presence of cyclic nucleotide (c-di-GMP or cGAMP), forms tetramers and higher-order oligomers through side-by-side packing. Interacts (when phosphorylated) with IRF3; following activation and phosphorylation on the pLxIS motif by TBK1, recruits IRF3. Interacts with DDX58/RIG-I, MAVS and SSR2. Interacts with RNF5 and TRIM56. Interacts with TBK1; when homodimer, leading to subsequent production of IFN-beta. Interacts with IFIT1 and IFIT2. Interacts with TRIM29; this interaction induces STING1 ubiquitination and subsequent degradation. Associates with the MHC-II complex. Interacts with STEEP1; interaction takes place upon cGAMP-activation and STING1 phosphorylation by MAP3K7/TAK1 and promotes STING1 translocation to COPII vesicles. Interacts with SEC24A, SEC24B and SEC24C; promoting translocation to COPII vesicles. Interacts (when ubiquitinated) with SQSTM1; leading to relocalization to autophagosomes. Interacts with SURF4. Interacts with HNRNPA2B1. Interacts with ZDHHC1; ZDHHC1 constitutively interacts with STING1 and in presence of DNA viruses activates it by promoting its cGAMP-induced oligomerization and the recruitment of downstream signaling components. Interacts with ZDHHC11; in presence of DNA viruses promotes the recruitment of IRF3 to STING1. Interacts with TOMM70. Interacts with TAB1; promoting recruitment of TAB1 to the endoplasmic reticulum membrane and subsequent activation of MAP3K7/TAK1. Interacts (via transmembrane domain) with TMEM203. Interacts with DDX41. As to quaternary structure, (Microbial infection) Interacts with African swine fever virus/ASFV protein A528R; this interaction mediates STING1 degradation. (Microbial infection) Interacts with African swine fever virus/ASFV minor capsid protein p17. In terms of assembly, (Microbial infection) Interacts with Pseudorabies virus protein UL13; this interaction mediates STING1 degradation in a RNF5-dependent manner. In terms of processing, phosphorylation by TBK1 leads to activation and production of IFN-beta. Following cyclic nucleotide (c-di-GMP or cGAMP)-binding, activation and translocation from the endoplasmic reticulum, STING1 is phosphorylated by TBK1 at Ser-365 in the pLxIS motif. The phosphorylated pLxIS motif constitutes an IRF3-binding motif, leading to recruitment of the transcription factor IRF3 to induce type-I interferons and other cytokines. Phosphorylated on tyrosine residues upon MHC-II aggregation. Dephosphorylation by PPP6C leads to inactivation and decreased production of IFN-beta. Phosphorylation at Ser-357 is also required to activate IRF3. Phosphorylation at Ser-354 by MAP3K7/TAK1 facilitates its interaction with STEEP1, promoting STING1 translocation to COPII vesicles. Ubiquitinated. Ubiquitinated via 'Lys-63'-linked ubiquitin chains in response to double-stranded DNA treatment, leading to relocalization to autophagosomes and subsequent degradation; this process is dependent on SQSTM1. 'Lys-63'-linked ubiquitination mediated by TRIM56 at Lys-150 promotes homodimerization and recruitment of the antiviral kinase TBK1 and subsequent production of IFN-beta. 'Lys-48'-linked polyubiquitination at Lys-150 occurring after viral infection is mediated by RNF5 and leads to proteasomal degradation. 'Lys-11'-linked polyubiquitination at Lys-150 by RNF26 leads to stabilize STING1: it protects STING1 from RNF5-mediated 'Lys-48'-linked polyubiquitination. 'Lys-33'-linked and 'Lys-48'-linked deubiquitinated by USP20; leading to its stabilization and promotion of innate antiviral response. 'Lys-48'-linked deubiquitinated by USP44; leading to its stabilization and promotion of innate antiviral response. Deubiquitinated by USP13; leading to inhibition of innate antiviral response. 'Lys-63'-linked deubiquitinated by USP49; leading to inhibition of the subsequent recruitment of TBK1 to the signaling complex. 'Lys-63'-linked ubiquitination mediated by RNF39 promotes the activation of the cGAS-STING pathway. Post-translationally, palmitoylation takes place in the Golgi apparatus and creates a platform for the recruitment of TBK1. Expressed at higher level in the spleen, lymph node, lung and bone marrow, followed by the small intestine, heart, liver and brain, and to a lesser extent in the stomach and kidney.

The protein resides in the endoplasmic reticulum membrane. It localises to the cytoplasm. It is found in the perinuclear region. The protein localises to the endoplasmic reticulum-Golgi intermediate compartment membrane. Its subcellular location is the golgi apparatus membrane. The protein resides in the cytoplasmic vesicle. It localises to the autophagosome membrane. It is found in the mitochondrion outer membrane. The protein localises to the cell membrane. It carries out the reaction H(+)(in) = H(+)(out). In terms of biological role, facilitator of innate immune signaling that acts as a sensor of cytosolic DNA from bacteria and viruses and promotes the production of type I interferon (IFN-alpha and IFN-beta). Innate immune response is triggered in response to non-CpG double-stranded DNA from viruses and bacteria delivered to the cytoplasm. Acts by binding cyclic dinucleotides: recognizes and binds cyclic di-GMP (c-di-GMP), a second messenger produced by bacteria, cyclic UMP-AMP (2',3'-cUAMP), and cyclic GMP-AMP (cGAMP), a messenger produced by CGAS in response to DNA virus in the cytosol. Upon binding to c-di-GMP, cUAMP or cGAMP, STING1 oligomerizes, translocates from the endoplasmic reticulum and is phosphorylated by TBK1 on the pLxIS motif, leading to recruitment and subsequent activation of the transcription factor IRF3 to induce expression of type I interferon and exert a potent anti-viral state. Exhibits 2',3' phosphodiester linkage-specific ligand recognition: can bind both 2'-3' linked cGAMP (2'-3'-cGAMP) and 3'-3' linked cGAMP but is preferentially activated by 2'-3' linked cGAMP. The preference for 2'-3'-cGAMP, compared to other linkage isomers is probably due to the ligand itself, whichs adopts an organized free-ligand conformation that resembles the STING1-bound conformation and pays low energy costs in changing into the active conformation. In addition to promote the production of type I interferons, plays a direct role in autophagy. Following cGAMP-binding, STING1 buds from the endoplasmic reticulum into COPII vesicles, which then form the endoplasmic reticulum-Golgi intermediate compartment (ERGIC). The ERGIC serves as the membrane source for WIPI2 recruitment and LC3 lipidation, leading to formation of autophagosomes that target cytosolic DNA or DNA viruses for degradation by the lysosome. Promotes autophagy by acting as a proton channel that directs proton efflux from the Golgi to facilitate MAP1LC3B/LC3B lipidation. The autophagy- and interferon-inducing activities can be uncoupled and autophagy induction is independent of TBK1 phosphorylation. Autophagy is also triggered upon infection by bacteria: following c-di-GMP-binding, which is produced by live Gram-positive bacteria, promotes reticulophagy. May be involved in translocon function, the translocon possibly being able to influence the induction of type I interferons. May be involved in transduction of apoptotic signals via its association with the major histocompatibility complex class II (MHC-II). The sequence is that of Stimulator of interferon genes protein from Sus scrofa (Pig).